A 475-amino-acid chain; its full sequence is UDP-N-acetylmuramate--L-alanine ligase (475 aa).

114–120 (GTHGKTT) contributes to the ATP binding site.

The protein belongs to the MurCDEF family.

It is found in the cytoplasm. It carries out the reaction UDP-N-acetyl-alpha-D-muramate + L-alanine + ATP = UDP-N-acetyl-alpha-D-muramoyl-L-alanine + ADP + phosphate + H(+). Its pathway is cell wall biogenesis; peptidoglycan biosynthesis. In terms of biological role, cell wall formation. The protein is UDP-N-acetylmuramate--L-alanine ligase of Bartonella bacilliformis (strain ATCC 35685 / KC583 / Herrer 020/F12,63).